The chain runs to 170 residues: F107 fimbrial protein (170 aa).

The N-terminal stretch at 1 to 21 (MKRLVFISFVALSMTAGSAMA) is a signal peptide. A disulfide bridge connects residues Cys37 and Cys78.

The protein belongs to the fimbrial protein family.

The protein resides in the fimbrium. Fimbriae (also called pili), polar filaments radiating from the surface of the bacterium to a length of 0.5-1.5 micrometers and numbering 100-300 per cell, enable bacteria to colonize the epithelium of specific host organs. This is F107 fimbrial protein (fedA) from Escherichia coli.